Here is a 335-residue protein sequence, read N- to C-terminus: Anthranilate phosphoribosyltransferase (335 aa).

Residues G79, 82-83 (GD), S87, 89-92 (NIST), 107-115 (KHGNRSITS), and S119 each bind 5-phospho-alpha-D-ribose 1-diphosphate. G79 contacts anthranilate. S91 is a Mg(2+) binding site. N110 lines the anthranilate pocket. R165 is a binding site for anthranilate. Residues D224 and E225 each contribute to the Mg(2+) site.

It belongs to the anthranilate phosphoribosyltransferase family. Homodimer. Requires Mg(2+) as cofactor.

It carries out the reaction N-(5-phospho-beta-D-ribosyl)anthranilate + diphosphate = 5-phospho-alpha-D-ribose 1-diphosphate + anthranilate. The protein operates within amino-acid biosynthesis; L-tryptophan biosynthesis; L-tryptophan from chorismate: step 2/5. Its function is as follows. Catalyzes the transfer of the phosphoribosyl group of 5-phosphorylribose-1-pyrophosphate (PRPP) to anthranilate to yield N-(5'-phosphoribosyl)-anthranilate (PRA). This is Anthranilate phosphoribosyltransferase from Lactococcus lactis subsp. cremoris (strain MG1363).